The primary structure comprises 908 residues: Protein translocase subunit SecA (908 aa).

Residues Gln87, 105–109, and Asp512 each bind ATP; that span reads GEGKT. The segment at 866-908 is disordered; it reads GSDEDDAIAAHTPMIRDGDKVGRNDPCPCGSGRKYKQCHGKLS. Residues 879–888 are compositionally biased toward basic and acidic residues; the sequence is MIRDGDKVGR. Zn(2+) is bound by residues Cys892, Cys894, Cys903, and His904. The segment covering 898–908 has biased composition (basic residues); it reads RKYKQCHGKLS.

Belongs to the SecA family. Monomer and homodimer. Part of the essential Sec protein translocation apparatus which comprises SecA, SecYEG and auxiliary proteins SecDF-YajC and YidC. Requires Zn(2+) as cofactor.

It is found in the cell inner membrane. It localises to the cytoplasm. The enzyme catalyses ATP + H2O + cellular proteinSide 1 = ADP + phosphate + cellular proteinSide 2.. Part of the Sec protein translocase complex. Interacts with the SecYEG preprotein conducting channel. Has a central role in coupling the hydrolysis of ATP to the transfer of proteins into and across the cell membrane, serving both as a receptor for the preprotein-SecB complex and as an ATP-driven molecular motor driving the stepwise translocation of polypeptide chains across the membrane. The polypeptide is Protein translocase subunit SecA (Shewanella oneidensis (strain ATCC 700550 / JCM 31522 / CIP 106686 / LMG 19005 / NCIMB 14063 / MR-1)).